The primary structure comprises 65 residues: Large ribosomal subunit protein bL35 (65 aa).

The tract at residues 1 to 65 (MPKIKTNRAA…GRLDRMLPYL (65 aa)) is disordered. Over residues 10–44 (AAKRFRKTASGKYKAGHANRSHILTKKATKRKRNL) the composition is skewed to basic residues. Positions 50–65 (VRAEDAGRLDRMLPYL) are enriched in basic and acidic residues.

This sequence belongs to the bacterial ribosomal protein bL35 family.

This is Large ribosomal subunit protein bL35 from Xylella fastidiosa (strain M23).